The sequence spans 1134 residues: Envelopment polyprotein (1134 aa).

A signal peptide spans 1–16; that stretch reads MWSLLLLAALVGQGFA. Residues 17 to 484 are Lumenal-facing; sequence LKNVFDMRIQ…PGFHGWATAA (468 aa). 10 disulfide bridges follow: C27/C149, C61/C155, C107/C126, C131/C136, C173/C183, C208/C245, C232/C349, C374/C433, C378/C387, and C403/C422. N-linked (GlcNAc...) asparagine; by host glycosylation occurs at N132. N233 and N345 each carry an N-linked (GlcNAc...) asparagine; by host glycan. N-linked (GlcNAc...) asparagine; by host glycosylation occurs at N397. The helical transmembrane segment at 485 to 504 threads the bilayer; the sequence is LLITFCFGWVLIPACTLAIL. Residues 505–626 are Cytoplasmic-facing; the sequence is LVLKFFANIL…NLFRYKSRCY (122 aa). The segment at 514 to 531 is binding to the ribonucleoprotein; it reads LHTSNQENRFKAILRKIK. 2 CCHC-type zinc fingers span residues 543 to 563 and 568 to 589; these read CEIC…NLSC and CPYC…YKVC. 3 binding to the ribonucleoprotein regions span residues 586 to 603, 590 to 601, and 609 to 623; these read YKVC…KKTV, QATHRFREDLKK, and WARL…RYKS. The ITAM domain occupies 609-632; it reads WARLYRTLNLFRYKSRCYILTMWT. The YxxL signature appears at 613–616; sequence YRTL. The helical transmembrane segment at 627-647 threads the bilayer; it reads ILTMWTLLLIIESILWAASAA. Residues 648 to 1105 lie on the Lumenal side of the membrane; the sequence is EIPLVPLWTD…WVMGIINGNW (458 aa). Cystine bridges form between C734–C769, C738–C776, C750–C884, C764–C895, C779–C903, C805–C814, C822–C831, and C862–C866. The segment at 756–776 is fusion loop; sequence YEYENSWACNPPDCPGVGTGC. N927 carries N-linked (GlcNAc...) asparagine; by host glycosylation. 5 cysteine pairs are disulfide-bonded: C969-C999, C992-C1044, C1009-C1014, C1045-C1050, and C1084-C1088. Residues 1106-1125 form a helical membrane-spanning segment; the sequence is VVLIVLCVLLLFSLILLSIL. The segment at 1121–1134 is binding to the ribonucleoprotein; it reads LLSILCPVRKHKKS. The Cytoplasmic portion of the chain corresponds to 1126–1134; the sequence is CPVRKHKKS.

It belongs to the hantavirus envelope glycoprotein family. In terms of assembly, homodimer. Homotetramer; forms heterotetrameric Gn-Gc spikes in the pre-fusion conformation. Interacts (via C-terminus) with the nucleoprotein. Interacts with host TUFM; this interaction contributes to the virus-induced degradation of mitochondria by autophagy, which leads to degradation of host MAVS and inhibition of type I interferon (IFN) responses. Interacts with host MAP1LC3B; this interaction contributes to the virus-induced degradation of mitochondria by autophagy, which leads to degradation of host MAVS and inhibition of type I interferon (IFN) responses. Homodimer. Homotetramer; forms heterotetrameric Gn-Gc spikes in the pre-fusion conformation. Homotrimer; forms homotrimer in the post-fusion conformation at acidic pH. Interacts (via C-terminus) with the nucleoprotein. In terms of processing, envelope polyprotein precursor is quickly cleaved in vivo just after synthesis, presumably by host signal peptidase.

It localises to the virion membrane. It is found in the host cell surface. The protein localises to the host Golgi apparatus membrane. The protein resides in the host endoplasmic reticulum membrane. Its subcellular location is the host mitochondrion. Its function is as follows. Forms homotetramers with glycoprotein C at the surface of the virion. Attaches the virion to host cell receptors including integrin ITGAV/ITGB3. This attachment induces virion internalization predominantly through clathrin-dependent endocytosis. Mediates the assembly and budding of infectious virus particles through its interaction with the nucleocapsid protein and the viral genome. May dysregulate normal immune and endothelial cell responses through an ITAM motif. Translocates to mitochondria, binds to host TUFM and recruits MAP1LC3B. These interactions induce mitochondrial autophagy and therefore destruction of host MAVS leading to inhibition of type I interferon (IFN) responses. Concomitant breakdown of glycoprotein N is apparently prevented by the nucleoprotein that may inhibit Gn-stimulated autophagosome-lysosome fusion. Interacts with the viral genomic RNA. Forms homotetramers with glycoprotein N at the surface of the virion. Attaches the virion to host cell receptors including integrin ITGAV/ITGB3. This attachment induces virion internalization predominantly through clathrin-dependent endocytosis. Class II fusion protein that promotes fusion of viral membrane with host endosomal membrane after endocytosis of the virion. This is Envelopment polyprotein (GP) from Homo sapiens (Human).